We begin with the raw amino-acid sequence, 98 residues long: NADH-ubiquinone oxidoreductase chain 4L (98 aa).

A run of 3 helical transmembrane segments spans residues 1-21 (MALI…GLLL), 29-49 (SLLC…VMIL), and 61-81 (IVLL…LVMV).

This sequence belongs to the complex I subunit 4L family. In terms of assembly, core subunit of respiratory chain NADH dehydrogenase (Complex I) which is composed of 45 different subunits.

It localises to the mitochondrion inner membrane. It carries out the reaction a ubiquinone + NADH + 5 H(+)(in) = a ubiquinol + NAD(+) + 4 H(+)(out). Functionally, core subunit of the mitochondrial membrane respiratory chain NADH dehydrogenase (Complex I) which catalyzes electron transfer from NADH through the respiratory chain, using ubiquinone as an electron acceptor. Part of the enzyme membrane arm which is embedded in the lipid bilayer and involved in proton translocation. This chain is NADH-ubiquinone oxidoreductase chain 4L (MT-ND4L), found in Rhinolophus monoceros (Formosan lesser horseshoe bat).